The primary structure comprises 507 residues: Cuticlin-4 (507 aa).

An N-terminal signal peptide occupies residues 1–19; sequence MFHFTRILAAFLLPTLCFC. The Extracellular segment spans residues 20–471; sequence GYSTAPSSTV…KTCFSTSRMY (452 aa). The region spanning 42–280 is the ZP domain; sequence VCETASISLL…YGCSNTQPQC (239 aa). Positions 292-350 are disordered; sequence KTTETAEPYPYDSHESGYPTRPANYPVASSRYPIPTTQAPASYPSSPAPPPPGADIDNG. N-linked (GlcNAc...) asparagine glycans are attached at residues asparagine 374 and asparagine 408. The helical transmembrane segment at 472 to 492 threads the bilayer; sequence FTLILLCLLFATTVVVFIVIV. Over 493-507 the chain is Cytoplasmic; sequence QKQRQILAQTAFFKP.

Its subcellular location is the cell membrane. Functionally, plays a role in alae formation and subsequent cuticle attachment in adults. The protein is Cuticlin-4 of Caenorhabditis elegans.